The primary structure comprises 79 residues: Bacteriochlorophyll c-binding protein (79 aa).

H25 contributes to the a bacteriochlorophyll c binding site.

This sequence belongs to the BChl C/E-binding protein family.

The protein resides in the chlorosome. It localises to the chlorosome envelope. Functionally, component of the photosynthetic apparatus. The light harvesting B740 complex binds bacteriochlorophyll c. The protein is Bacteriochlorophyll c-binding protein (csmA) of Chlorobaculum tepidum (strain ATCC 49652 / DSM 12025 / NBRC 103806 / TLS) (Chlorobium tepidum).